A 498-amino-acid chain; its full sequence is ATP synthase subunit beta, chloroplastic (498 aa).

172 to 179 (GGAGVGKT) contributes to the ATP binding site.

It belongs to the ATPase alpha/beta chains family. In terms of assembly, F-type ATPases have 2 components, CF(1) - the catalytic core - and CF(0) - the membrane proton channel. CF(1) has five subunits: alpha(3), beta(3), gamma(1), delta(1), epsilon(1). CF(0) has four main subunits: a(1), b(1), b'(1) and c(9-12).

Its subcellular location is the plastid. The protein localises to the chloroplast thylakoid membrane. The enzyme catalyses ATP + H2O + 4 H(+)(in) = ADP + phosphate + 5 H(+)(out). In terms of biological role, produces ATP from ADP in the presence of a proton gradient across the membrane. The catalytic sites are hosted primarily by the beta subunits. This is ATP synthase subunit beta, chloroplastic from Eucalyptus globulus subsp. globulus (Tasmanian blue gum).